The primary structure comprises 195 residues: MTPTLLSAFWTYTLITAMTPGPNNILALSSATSHGFRQSTRVLAGMSLGFLIVMLLCAGISFSLAVIDPAAVHLLSWAGAAYIVWLAWKIATSPTKEDGLQAKPISFWASFALQFVNVKIILYGVTALSTFVLPQTQALSWVVGVSVLLAMIGTFGNVCWALAGHLFQRLFRQYGRQLNIVLALLLIYCAVRIFY.

The Periplasmic segment spans residues 1-7 (MTPTLLS). The helical transmembrane segment at 8–28 (AFWTYTLITAMTPGPNNILAL) threads the bilayer. Residues 29 to 46 (SSATSHGFRQSTRVLAGM) are Cytoplasmic-facing. The chain crosses the membrane as a helical span at residues 47-67 (SLGFLIVMLLCAGISFSLAVI). Topologically, residues 68-69 (DP) are periplasmic. A helical membrane pass occupies residues 70–90 (AAVHLLSWAGAAYIVWLAWKI). Over 91–104 (ATSPTKEDGLQAKP) the chain is Cytoplasmic. Residues 105–125 (ISFWASFALQFVNVKIILYGV) form a helical membrane-spanning segment. The Periplasmic portion of the chain corresponds to 126-141 (TALSTFVLPQTQALSW). A helical transmembrane segment spans residues 142–162 (VVGVSVLLAMIGTFGNVCWAL). Residues 163–176 (AGHLFQRLFRQYGR) are Cytoplasmic-facing. The helical transmembrane segment at 177 to 194 (QLNIVLALLLIYCAVRIF) threads the bilayer. Y195 is a topological domain (periplasmic).

Belongs to the Rht family.

It localises to the cell inner membrane. The catalysed reaction is O-acetyl-L-serine(in) = O-acetyl-L-serine(out). It catalyses the reaction L-cysteine(in) = L-cysteine(out). Functionally, exporter of O-acetylserine (OAS) and cysteine. The chain is Cysteine/O-acetylserine efflux protein (eamB) from Escherichia coli O139:H28 (strain E24377A / ETEC).